Here is a 482-residue protein sequence, read N- to C-terminus: UDP-N-acetylmuramate--L-alanine ligase (482 aa).

123–129 (GTHGKTT) provides a ligand contact to ATP.

The protein belongs to the MurCDEF family.

It is found in the cytoplasm. The catalysed reaction is UDP-N-acetyl-alpha-D-muramate + L-alanine + ATP = UDP-N-acetyl-alpha-D-muramoyl-L-alanine + ADP + phosphate + H(+). It participates in cell wall biogenesis; peptidoglycan biosynthesis. Functionally, cell wall formation. This is UDP-N-acetylmuramate--L-alanine ligase from Pseudomonas putida (strain W619).